We begin with the raw amino-acid sequence, 256 residues long: Ribonuclease HII (256 aa).

In terms of domain architecture, RNase H type-2 spans 67–255 (QLVGGVDEVG…VSEMVGLKKA (189 aa)). The a divalent metal cation site is built by aspartate 73, glutamate 74, and aspartate 165.

It belongs to the RNase HII family. The cofactor is Mn(2+). Mg(2+) serves as cofactor.

The protein localises to the cytoplasm. It catalyses the reaction Endonucleolytic cleavage to 5'-phosphomonoester.. In terms of biological role, endonuclease that specifically degrades the RNA of RNA-DNA hybrids. In Lactobacillus delbrueckii subsp. bulgaricus (strain ATCC 11842 / DSM 20081 / BCRC 10696 / JCM 1002 / NBRC 13953 / NCIMB 11778 / NCTC 12712 / WDCM 00102 / Lb 14), this protein is Ribonuclease HII.